We begin with the raw amino-acid sequence, 321 residues long: Electron transfer flavoprotein subunit alpha (321 aa).

Residues arginine 211, serine 236, arginine 237, glutamine 250, valine 251, serine 254, glycine 255, serine 270, serine 272, glutamine 274, histidine 275, asparagine 289, aspartate 307, and isoleucine 308 each contribute to the FAD site.

In terms of assembly, heterodimer of an alpha and a beta subunit. Forms a ternary complex with trimethylamine dehydrogenase. The cofactor is FAD.

In terms of biological role, heterodimeric electron transfer flavoprotein that accepts electrons from trimethylamine dehydrogenase. It transfers the electrons to the main respiratory chain via ETF-ubiquinone oxidoreductase (ETF dehydrogenase). The chain is Electron transfer flavoprotein subunit alpha (etfA) from Methylophilus methylotrophus (Bacterium W3A1).